A 361-amino-acid polypeptide reads, in one-letter code: MSKFSFNIHHQHKKARSGIIVTAHGEMRTPAFMPVGTRGTVKAMLPESVAETGADILLGNTYHLMLQPTAERIVQLGGLHKFMNWDKPILTDSGGFQVMSLSKLCKITEEGVSFSSHINGDKYMLTPERSTEIQYLLGSTITMAFDECTPYPATFEEAKTSMQLTTRWANRSRNTFVKREGYAQFGIIQGSVYEELREQSAKDLVELDFDGYAIGGLAVGEGQELMFKVLDYAPDFLPQNKPRYLMGVGKPADIIGAVSRGIDMFDCVIPTRSGRNGQAFTKYGTVNIRNSKYADDNKPLEHDCLCPACRNYSKAYLHHLVRIGEILGSMLMTWHNLTYFQNLMSRIRAYIKLGKDFDFDS.

Aspartate 92 acts as the Proton acceptor in catalysis. Residues 92-96, aspartate 146, glutamine 189, and glycine 216 each bind substrate; that span reads DSGGF. Residues 247–253 form an RNA binding region; that stretch reads GVGKPAD. Aspartate 266 acts as the Nucleophile in catalysis. The interval 271–275 is RNA binding; important for wobble base 34 recognition; that stretch reads TRSGR. Zn(2+) is bound by residues cysteine 304, cysteine 306, cysteine 309, and histidine 335.

It belongs to the queuine tRNA-ribosyltransferase family. In terms of assembly, homodimer. Within each dimer, one monomer is responsible for RNA recognition and catalysis, while the other monomer binds to the replacement base PreQ1. It depends on Zn(2+) as a cofactor.

It carries out the reaction 7-aminomethyl-7-carbaguanine + guanosine(34) in tRNA = 7-aminomethyl-7-carbaguanosine(34) in tRNA + guanine. It participates in tRNA modification; tRNA-queuosine biosynthesis. Catalyzes the base-exchange of a guanine (G) residue with the queuine precursor 7-aminomethyl-7-deazaguanine (PreQ1) at position 34 (anticodon wobble position) in tRNAs with GU(N) anticodons (tRNA-Asp, -Asn, -His and -Tyr). Catalysis occurs through a double-displacement mechanism. The nucleophile active site attacks the C1' of nucleotide 34 to detach the guanine base from the RNA, forming a covalent enzyme-RNA intermediate. The proton acceptor active site deprotonates the incoming PreQ1, allowing a nucleophilic attack on the C1' of the ribose to form the product. After dissociation, two additional enzymatic reactions on the tRNA convert PreQ1 to queuine (Q), resulting in the hypermodified nucleoside queuosine (7-(((4,5-cis-dihydroxy-2-cyclopenten-1-yl)amino)methyl)-7-deazaguanosine). In Rickettsia rickettsii (strain Iowa), this protein is Queuine tRNA-ribosyltransferase.